A 694-amino-acid polypeptide reads, in one-letter code: Polyphosphate kinase (694 aa).

Residue asparagine 45 participates in ATP binding. The Mg(2+) site is built by arginine 367 and arginine 397. The Phosphohistidine intermediate role is filled by histidine 427. ATP is bound by residues tyrosine 460, arginine 553, and histidine 580.

The protein belongs to the polyphosphate kinase 1 (PPK1) family. Requires Mg(2+) as cofactor. Post-translationally, an intermediate of this reaction is the autophosphorylated ppk in which a phosphate is covalently linked to a histidine residue through a N-P bond.

The enzyme catalyses [phosphate](n) + ATP = [phosphate](n+1) + ADP. Catalyzes the reversible transfer of the terminal phosphate of ATP to form a long-chain polyphosphate (polyP). The polypeptide is Polyphosphate kinase (Campylobacter jejuni subsp. jejuni serotype O:6 (strain 81116 / NCTC 11828)).